The chain runs to 292 residues: Small ribosomal subunit biogenesis GTPase RsgA (292 aa).

In terms of domain architecture, CP-type G spans Lys62 to Leu213. Residues Ser111–Asp114 and Gly156–Thr164 each bind GTP. The Zn(2+) site is built by Cys237, Cys242, His244, and Cys250.

Belongs to the TRAFAC class YlqF/YawG GTPase family. RsgA subfamily. In terms of assembly, monomer. Associates with 30S ribosomal subunit, binds 16S rRNA. Zn(2+) is required as a cofactor.

Its subcellular location is the cytoplasm. One of several proteins that assist in the late maturation steps of the functional core of the 30S ribosomal subunit. Helps release RbfA from mature subunits. May play a role in the assembly of ribosomal proteins into the subunit. Circularly permuted GTPase that catalyzes slow GTP hydrolysis, GTPase activity is stimulated by the 30S ribosomal subunit. The chain is Small ribosomal subunit biogenesis GTPase RsgA from Streptococcus pneumoniae serotype 4 (strain ATCC BAA-334 / TIGR4).